We begin with the raw amino-acid sequence, 577 residues long: Phosphatidylinositol/phosphatidylcholine transfer protein SFH14 (577 aa).

Residues 1–22 form a disordered region; that stretch reads MSGREQTGEKLSDSEYIEEEPR. Residues 136–311 form the CRAL-TRIO domain; sequence ELDEVTRHYP…FLGGLCKCPN (176 aa). The disordered stretch occupies residues 364 to 383; it reads ETLKEEPEPEEYYSSTGSRS. Positions 523 to 550 form a coiled coil; the sequence is EANEKLLAESLERIKSLELDLDKTKSVL.

It belongs to the SFH family.

It localises to the golgi apparatus membrane. Its subcellular location is the cell membrane. Functionally, required for transport of secretory proteins from the Golgi complex. Catalyzes the transfer of phosphatidylinositol and phosphatidylcholine between membranes in vitro. This chain is Phosphatidylinositol/phosphatidylcholine transfer protein SFH14 (SFH14), found in Arabidopsis thaliana (Mouse-ear cress).